A 491-amino-acid chain; its full sequence is V-type proton ATPase subunit B 1 (491 aa).

Arginine 380 serves as a coordination point for ATP.

The protein belongs to the ATPase alpha/beta chains family. As to quaternary structure, V-ATPase is a heteromultimeric enzyme made up of two complexes: the ATP-hydrolytic V1 complex and the proton translocation V0 complex. The V1 complex consists of three catalytic AB heterodimers that form a heterohexamer, three peripheral stalks each consisting of EG heterodimers, one central rotor including subunits D and F, and the regulatory subunits C and H. The proton translocation complex V0 consists of the proton transport subunit a, a ring of proteolipid subunits c9c'', rotary subunit d, subunits e and f, and the accessory subunits vah-19/Ac45 and vah-20/PRR. Expressed ubiquitously. Highly expressed in the H-shaped excretory cell, the excretory pore, the intestine, and hypodermal cells. Expressed in the nervous system. Expressed at low levels in muscles.

In terms of biological role, non-catalytic subunit of the V1 complex of vacuolar(H+)-ATPase (V-ATPase), a multisubunit enzyme composed of a peripheral complex (V1) that hydrolyzes ATP and a membrane integral complex (V0) that translocates protons. V-ATPase is responsible for acidifying and maintaining the pH of intracellular compartments and in some cell types, is targeted to the plasma membrane, where it is responsible for acidifying the extracellular environment. Essential for the proper assembly and activity of V-ATPase. Required maternally for early embryogenesis and zygotically during morphogenesis. Specifically, involved in the clearance of apoptotic cell corpses in embryos. Also, during embryonic development, the V-ATPase is required to repress fusion of epidermal cells probably by negatively regulating eff-1-mediated cell fusion. In neurons, required for necrotic cell death by promoting intracellular acidification. Required for cell death induced by hypoxia. Required for acidification of synaptic vesicles and the release of neurotransmitters from adult neurons. This is V-type proton ATPase subunit B 1 from Caenorhabditis elegans.